Consider the following 319-residue polypeptide: V-set and transmembrane domain-containing protein 4 (319 aa).

An N-terminal signal peptide occupies residues 1–23 (MRLRLLALAAAVLLGPAPEVCGA). Positions 24–154 (LNVTVSPGPV…SSATEMRVIS (131 aa)) constitute an Ig-like domain. N-linked (GlcNAc...) asparagine glycans are attached at residues Asn-25 and Asn-41. Cys-46 and Cys-126 are disulfide-bonded. Asn-143 carries an N-linked (GlcNAc...) asparagine glycan. The helical transmembrane segment at 180–200 (AVLVCCVGILSVLLFTLVIAW) threads the bilayer.

In terms of processing, proteolytically cleaved to generate a bioactive peptide. Peptide Lv is widely expressed in various tissues and the central nervous system, including the retinal photoreceptor layer, hippocampus, olfactory bulb, and cerebellum.

Its subcellular location is the cell membrane. It is found in the secreted. Peptide Lv enhances L-type voltage-gated calcium channel (L-VGCC) currents in retinal photoreceptors. The sequence is that of V-set and transmembrane domain-containing protein 4 (Vstm4) from Mus musculus (Mouse).